A 202-amino-acid polypeptide reads, in one-letter code: Probable thymidylate kinase (202 aa).

13 to 20 (GIDGSGKT) contributes to the ATP binding site.

It belongs to the thymidylate kinase family.

The catalysed reaction is dTMP + ATP = dTDP + ADP. This Picrophilus torridus (strain ATCC 700027 / DSM 9790 / JCM 10055 / NBRC 100828 / KAW 2/3) protein is Probable thymidylate kinase.